A 186-amino-acid polypeptide reads, in one-letter code: UPF0200 protein Hbut_0338 (186 aa).

13 to 20 (GMPGSGKS) provides a ligand contact to ATP.

Belongs to the UPF0200 family.

The polypeptide is UPF0200 protein Hbut_0338 (Hyperthermus butylicus (strain DSM 5456 / JCM 9403 / PLM1-5)).